A 139-amino-acid chain; its full sequence is Holo-[acyl-carrier-protein] synthase (139 aa).

The Mg(2+) site is built by D9 and E63.

This sequence belongs to the P-Pant transferase superfamily. AcpS family. It depends on Mg(2+) as a cofactor.

The protein resides in the cytoplasm. The catalysed reaction is apo-[ACP] + CoA = holo-[ACP] + adenosine 3',5'-bisphosphate + H(+). Its function is as follows. Transfers the 4'-phosphopantetheine moiety from coenzyme A to a Ser of acyl-carrier-protein. The protein is Holo-[acyl-carrier-protein] synthase of Wigglesworthia glossinidia brevipalpis.